We begin with the raw amino-acid sequence, 150 residues long: Lipoprotein signal peptidase (150 aa).

The next 3 helical transmembrane spans lie at 8–28 (FYAL…LAHA), 58–78 (GFSW…GWFL), and 81–101 (TTGS…NVFD). Catalysis depends on residues D116 and D132. Residues 126-146 (VVFNIADLFILAGVFGTFLFL) form a helical membrane-spanning segment.

The protein belongs to the peptidase A8 family.

It localises to the cell membrane. It catalyses the reaction Release of signal peptides from bacterial membrane prolipoproteins. Hydrolyzes -Xaa-Yaa-Zaa-|-(S,diacylglyceryl)Cys-, in which Xaa is hydrophobic (preferably Leu), and Yaa (Ala or Ser) and Zaa (Gly or Ala) have small, neutral side chains.. The protein operates within protein modification; lipoprotein biosynthesis (signal peptide cleavage). In terms of biological role, this protein specifically catalyzes the removal of signal peptides from prolipoproteins. The polypeptide is Lipoprotein signal peptidase (Tropheryma whipplei (strain TW08/27) (Whipple's bacillus)).